Here is a 515-residue protein sequence, read N- to C-terminus: 2,3-bisphosphoglycerate-independent phosphoglycerate mutase (515 aa).

Residues Asp14 and Ser64 each coordinate Mn(2+). Ser64 serves as the catalytic Phosphoserine intermediate. Substrate is bound by residues His125, 155-156 (RD), Arg187, Arg193, 263-266 (RADR), and Lys337. Mn(2+) is bound by residues Asp404, His408, Asp445, His446, and His464.

It belongs to the BPG-independent phosphoglycerate mutase family. Monomer. It depends on Mn(2+) as a cofactor.

It carries out the reaction (2R)-2-phosphoglycerate = (2R)-3-phosphoglycerate. The protein operates within carbohydrate degradation; glycolysis; pyruvate from D-glyceraldehyde 3-phosphate: step 3/5. In terms of biological role, catalyzes the interconversion of 2-phosphoglycerate and 3-phosphoglycerate. This Cronobacter sakazakii (strain ATCC BAA-894) (Enterobacter sakazakii) protein is 2,3-bisphosphoglycerate-independent phosphoglycerate mutase.